Consider the following 134-residue polypeptide: Cytochrome c-550 (134 aa).

Position 1 is a pyrrolidone carboxylic acid (Gln1). Residues Cys15, Cys18, His19, and Met100 each contribute to the heme c site.

Post-translationally, binds 1 heme c group covalently per subunit.

In terms of biological role, electron donor for nitrous-oxide reductase. The chain is Cytochrome c-550 from Paracoccus pantotrophus (Thiosphaera pantotropha).